Consider the following 623-residue polypeptide: V-type proton ATPase catalytic subunit A (623 aa).

252 to 259 provides a ligand contact to ATP; it reads GAFGCGKT.

This sequence belongs to the ATPase alpha/beta chains family. In terms of assembly, V-ATPase is a heteromultimeric enzyme composed of a peripheral catalytic V1 complex (main components: subunits A, B, C, D, E, and F) attached to an integral membrane V0 proton pore complex (main component: the proteolipid protein).

The enzyme catalyses ATP + H2O + 4 H(+)(in) = ADP + phosphate + 5 H(+)(out). Functionally, catalytic subunit of the peripheral V1 complex of vacuolar ATPase. V-ATPase vacuolar ATPase is responsible for acidifying a variety of intracellular compartments in eukaryotic cells. The polypeptide is V-type proton ATPase catalytic subunit A (Brassica napus (Rape)).